The primary structure comprises 1132 residues: Ubiquitin carboxyl-terminal hydrolase 43 (1132 aa).

The tract at residues 1–103 (MDPGVGNALG…GARPPGAQGL (103 aa)) is disordered. Residues 17–28 (RPRRRRSLRRLL) are compositionally biased toward basic residues. Low complexity-rich tracts occupy residues 29–44 (NRFL…SGDS) and 63–78 (FACA…GSPG). Residues 101 to 710 (QGLKNHGNTC…GAYILFYQKR (610 aa)) form the USP domain. Residue Cys110 is the Nucleophile of the active site. His668 serves as the catalytic Proton acceptor. Arg746 is modified (asymmetric dimethylarginine). Disordered regions lie at residues 839-891 (RRRP…TGVP), 935-1008 (TVMP…RGQG), 1024-1044 (RTVR…SDRL), and 1057-1106 (RESP…GEQI). Residues 941–950 (GDEKPARPEG) are compositionally biased toward basic and acidic residues. Low complexity predominate over residues 958-967 (GSSQVGSQSS). Position 970 is a phosphoserine (Ser970). Residues 994–1006 (AAMEERAPDKDRG) are compositionally biased toward basic and acidic residues.

It belongs to the peptidase C19 family.

The catalysed reaction is Thiol-dependent hydrolysis of ester, thioester, amide, peptide and isopeptide bonds formed by the C-terminal Gly of ubiquitin (a 76-residue protein attached to proteins as an intracellular targeting signal).. Functionally, may recognize and hydrolyze the peptide bond at the C-terminal Gly of ubiquitin. Involved in the processing of poly-ubiquitin precursors as well as that of ubiquitinated proteins. This Mus musculus (Mouse) protein is Ubiquitin carboxyl-terminal hydrolase 43 (Usp43).